The sequence spans 309 residues: Serine/threonine-protein phosphatase 2A catalytic subunit alpha isoform (309 aa).

Mn(2+) contacts are provided by D57, H59, D85, and N117. Zn(2+)-binding residues include D57, H59, and D85. D85 and N117 together coordinate Fe(3+). H118 functions as the Proton donor in the catalytic mechanism. Residues H167 and H241 each coordinate Mn(2+). Residues H167 and H241 each coordinate Fe(3+). At Y307 the chain carries Phosphotyrosine. L309 bears the Leucine methyl ester mark.

It belongs to the PPP phosphatase family. PP-1 subfamily. PP2A consists of a common heterodimeric core enzyme, composed of PPP2CA, a 36 kDa catalytic subunit (subunit C), and PPP2R1A, a 65 kDa constant regulatory subunit (PR65 or subunit A), that associates with a variety of regulatory subunits. Proteins that associate with the core dimer include three families of regulatory subunits B (the R2/B/PR55/B55, R3/B''/PR72/PR130/PR59 and R5/B'/B56 families), the 48 kDa variable regulatory subunit, viral proteins, and cell signaling molecules. May indirectly interact with SGOL1, most probably through regulatory B56 subunits. Phosphatase component of the Integrator-PP2A (INTAC) complex, composed of the Integrator core complex and protein phosphatase 2A subunits PPP2CA and PPP2R1A. Mn(2+) serves as cofactor. The cofactor is Fe(3+). It depends on Zn(2+) as a cofactor. Reversibly methyl esterified on Leu-309 by leucine carboxyl methyltransferase 1 (LCMT1) and protein phosphatase methylesterase 1 (PPME1). Carboxyl methylation influences the affinity of the catalytic subunit for the different regulatory subunits, thereby modulating the PP2A holoenzyme's substrate specificity, enzyme activity and cellular localization. In terms of processing, phosphorylation of either threonine (by autophosphorylation-activated protein kinase) or tyrosine results in inactivation of the phosphatase. Auto-dephosphorylation has been suggested as a mechanism for reactivation.

It localises to the cytoplasm. Its subcellular location is the nucleus. The protein localises to the chromosome. The protein resides in the centromere. It is found in the cytoskeleton. It localises to the spindle pole. It catalyses the reaction O-phospho-L-seryl-[protein] + H2O = L-seryl-[protein] + phosphate. The catalysed reaction is O-phospho-L-threonyl-[protein] + H2O = L-threonyl-[protein] + phosphate. With respect to regulation, inhibited by the interaction between PPP2R2A and ARPP19; this inhibition is enhanced when ARPP19 is phosphorylated. Inhibited by the interaction between PPP2R2A and PABIR1/FAM122A. Its function is as follows. PP2A is the major phosphatase for microtubule-associated proteins (MAPs). PP2A can modulate the activity of phosphorylase B kinase casein kinase 2, mitogen-stimulated S6 kinase, and MAP-2 kinase. Key mediator of a quality checkpoint during transcription elongation as part of the Integrator-PP2A (INTAC) complex. The INTAC complex drives premature transcription termination of transcripts that are unfavorably configured for transcriptional elongation: within the INTAC complex, PPP2CA catalyzes dephosphorylation of the C-terminal domain (CTD) of Pol II subunit POLR2A/RPB1 and SUPT5H/SPT5, thereby preventing transcriptional elongation. The chain is Serine/threonine-protein phosphatase 2A catalytic subunit alpha isoform (PPP2CA) from Gallus gallus (Chicken).